The primary structure comprises 141 residues: Envelope protein A28 homolog (141 aa).

Residues 1–21 traverse the membrane as a helical; Signal-anchor for type II membrane protein segment; the sequence is MNPTSIVLIVIATVAVCLIIM. Residues 22 to 141 are Virion surface-facing; that stretch reads QIYYIYENYD…QDCIFLKSVI (120 aa).

The protein belongs to the poxviridae A28 protein family. Post-translationally, contains two intramolecular disulfide bonds. They are created by the viral disulfide bond formation pathway, a poxvirus-specific pathway that operates on the cytoplasmic side of the MV membranes.

Its subcellular location is the virion membrane. Envelope protein required for virus entry into host cell and for cell-cell fusion (syncytium formation). This is Envelope protein A28 homolog from Erythrocebus patas (Red guenon).